The sequence spans 469 residues: 3-isopropylmalate dehydratase large subunit (469 aa).

The [4Fe-4S] cluster site is built by Cys-347, Cys-410, and Cys-413.

It belongs to the aconitase/IPM isomerase family. LeuC type 1 subfamily. In terms of assembly, heterodimer of LeuC and LeuD. [4Fe-4S] cluster is required as a cofactor.

It catalyses the reaction (2R,3S)-3-isopropylmalate = (2S)-2-isopropylmalate. It participates in amino-acid biosynthesis; L-leucine biosynthesis; L-leucine from 3-methyl-2-oxobutanoate: step 2/4. In terms of biological role, catalyzes the isomerization between 2-isopropylmalate and 3-isopropylmalate, via the formation of 2-isopropylmaleate. The protein is 3-isopropylmalate dehydratase large subunit of Ralstonia nicotianae (strain ATCC BAA-1114 / GMI1000) (Ralstonia solanacearum).